We begin with the raw amino-acid sequence, 224 residues long: Phosphoribosylformylglycinamidine synthase subunit PurQ (224 aa).

The region spanning 2-224 is the Glutamine amidotransferase type-1 domain; it reads KVTILQFPGT…IKMLQGFLRA (223 aa). The Nucleophile role is filled by Cys-86. Catalysis depends on residues His-200 and Glu-202.

Part of the FGAM synthase complex composed of 1 PurL, 1 PurQ and 2 PurS subunits.

Its subcellular location is the cytoplasm. It catalyses the reaction N(2)-formyl-N(1)-(5-phospho-beta-D-ribosyl)glycinamide + L-glutamine + ATP + H2O = 2-formamido-N(1)-(5-O-phospho-beta-D-ribosyl)acetamidine + L-glutamate + ADP + phosphate + H(+). The enzyme catalyses L-glutamine + H2O = L-glutamate + NH4(+). The protein operates within purine metabolism; IMP biosynthesis via de novo pathway; 5-amino-1-(5-phospho-D-ribosyl)imidazole from N(2)-formyl-N(1)-(5-phospho-D-ribosyl)glycinamide: step 1/2. Functionally, part of the phosphoribosylformylglycinamidine synthase complex involved in the purines biosynthetic pathway. Catalyzes the ATP-dependent conversion of formylglycinamide ribonucleotide (FGAR) and glutamine to yield formylglycinamidine ribonucleotide (FGAM) and glutamate. The FGAM synthase complex is composed of three subunits. PurQ produces an ammonia molecule by converting glutamine to glutamate. PurL transfers the ammonia molecule to FGAR to form FGAM in an ATP-dependent manner. PurS interacts with PurQ and PurL and is thought to assist in the transfer of the ammonia molecule from PurQ to PurL. This chain is Phosphoribosylformylglycinamidine synthase subunit PurQ, found in Sulfurimonas denitrificans (strain ATCC 33889 / DSM 1251) (Thiomicrospira denitrificans (strain ATCC 33889 / DSM 1251)).